The primary structure comprises 152 residues: 2-C-methyl-D-erythritol 2,4-cyclodiphosphate synthase (152 aa).

Residues Asp-8 and His-10 each coordinate a divalent metal cation. Residues 8–10 (DSH) and 34–35 (HS) contribute to the 4-CDP-2-C-methyl-D-erythritol 2-phosphate site. His-42 is a binding site for a divalent metal cation. 4-CDP-2-C-methyl-D-erythritol 2-phosphate is bound by residues 56–58 (DIG) and 61–65 (FPDTD).

It belongs to the IspF family. In terms of assembly, homotrimer. The cofactor is a divalent metal cation.

It catalyses the reaction 4-CDP-2-C-methyl-D-erythritol 2-phosphate = 2-C-methyl-D-erythritol 2,4-cyclic diphosphate + CMP. It functions in the pathway isoprenoid biosynthesis; isopentenyl diphosphate biosynthesis via DXP pathway; isopentenyl diphosphate from 1-deoxy-D-xylulose 5-phosphate: step 4/6. Functionally, involved in the biosynthesis of isopentenyl diphosphate (IPP) and dimethylallyl diphosphate (DMAPP), two major building blocks of isoprenoid compounds. Catalyzes the conversion of 4-diphosphocytidyl-2-C-methyl-D-erythritol 2-phosphate (CDP-ME2P) to 2-C-methyl-D-erythritol 2,4-cyclodiphosphate (ME-CPP) with a corresponding release of cytidine 5-monophosphate (CMP). The polypeptide is 2-C-methyl-D-erythritol 2,4-cyclodiphosphate synthase (Thermus thermophilus (strain ATCC BAA-163 / DSM 7039 / HB27)).